The chain runs to 156 residues: Cytochrome c-type biogenesis protein CcmE 2 (156 aa).

Residues 1–8 (MNPQRRRR) lie on the Cytoplasmic side of the membrane. Residues 9-29 (LWLVLALVLAGGLATTLVAMA) traverse the membrane as a helical; Signal-anchor for type II membrane protein segment. Topologically, residues 30–156 (LQRNVAYLYT…AAAGQVGERQ (127 aa)) are periplasmic. Residues His-123 and Tyr-127 each coordinate heme. The segment at 136–156 (MGSAHRKHDVPAAAGQVGERQ) is disordered.

It belongs to the CcmE/CycJ family.

Its subcellular location is the cell inner membrane. In terms of biological role, heme chaperone required for the biogenesis of c-type cytochromes. Transiently binds heme delivered by CcmC and transfers the heme to apo-cytochromes in a process facilitated by CcmF and CcmH. The chain is Cytochrome c-type biogenesis protein CcmE 2 from Xanthomonas axonopodis pv. citri (strain 306).